The following is a 23-amino-acid chain: Acidic phospholipase A2 Ts-A2 (23 aa).

The cofactor is Ca(2+). In terms of processing, contains 7 disulfide bonds. In terms of tissue distribution, expressed by the venom gland.

It is found in the secreted. The enzyme catalyses a 1,2-diacyl-sn-glycero-3-phosphocholine + H2O = a 1-acyl-sn-glycero-3-phosphocholine + a fatty acid + H(+). Its function is as follows. Exhibits moderate hydrolytic activities and prefers the anionic micelles (dPPC with deoxycholate) to the zwitterionic micelles (dPPC with Triton X-100). PLA2 catalyzes the calcium-dependent hydrolysis of the 2-acyl groups in 3-sn-phosphoglycerides. The protein is Acidic phospholipase A2 Ts-A2 of Trimeresurus stejnegeri (Chinese green tree viper).